The following is a 162-amino-acid chain: MRILKPYLRSTSIQCYLCLLLNSHFLTEAGIHVFILGCISAGLPKTEANWQYVINDLKTIEHLIQSIHMDATLYTEGDAHPNCKVTAMQCFLLELRVILHESKNAAIYEIIENLTMLANSNLSSIENKTELGCKECEELEEKSIKEFLKSFVHIVKMFINTS.

An N-terminal signal peptide occupies residues 1-29 (MRILKPYLRSTSIQCYLCLLLNSHFLTEA). A propeptide spanning residues 30–48 (GIHVFILGCISAGLPKTEA) is cleaved from the precursor. Disulfide bonds link Cys83-Cys133 and Cys90-Cys136. Residues Asn113, Asn121, and Asn127 are each glycosylated (N-linked (GlcNAc...) asparagine).

The protein belongs to the IL-15/IL-21 family.

Its subcellular location is the secreted. Its function is as follows. Cytokine that plays a major role in the development of inflammatory and protective immune responses to microbial invaders and parasites by modulating immune cells of both the innate and adaptive immune systems. Stimulates the proliferation of natural killer cells, T-cells and B-cells and promotes the secretion of several cytokines. In monocytes, induces the production of IL8 and monocyte chemotactic protein 1/CCL2, two chemokines that attract neutrophils and monocytes respectively to sites of infection. Unlike most cytokines, which are secreted in soluble form, IL15 is expressed in association with its high affinity IL15RA on the surface of IL15-producing cells and delivers signals to target cells that express IL2RB and IL2RG receptor subunits. Binding to its receptor triggers the phosphorylation of JAK1 and JAK3 and the recruitment and subsequent phosphorylation of signal transducer and activator of transcription-3/STAT3 and STAT5. In mast cells, induces the rapid tyrosine phosphorylation of STAT6 and thereby controls mast cell survival and release of cytokines such as IL4. In Bubalus bubalis (Domestic water buffalo), this protein is Interleukin-15 (IL15).